A 379-amino-acid chain; its full sequence is Junctional adhesion molecule-like (379 aa).

Positions 1–20 (MLCLLKLIVIPVILAPVGYP) are cleaved as a signal peptide. The Extracellular portion of the chain corresponds to 21-281 (QGLPGLTVSS…QQGILNGNQL (261 aa)). 2 consecutive Ig-like V-type domains span residues 24-135 (PGLT…KPVE) and 140-250 (PEEP…KTIV). A disulfide bridge connects residues C45 and C119. 3 N-linked (GlcNAc...) asparagine glycosylation sites follow: N79, N89, and N125. C158 and C236 are joined by a disulfide. Residues 282–302 (VIIVGIVCATFLLLPVLILIV) traverse the membrane as a helical segment. The Cytoplasmic segment spans residues 303–379 (KKAKWNKSSV…SLVRSSVRSK (77 aa)). The residue at position 355 (Y355) is a Phosphotyrosine.

Belongs to the immunoglobulin superfamily. Homodimer; active form in leukocyte-endothelial cell adhesion. Interacts (homodimeric form) with CXADR. Interacts (via cytoplasmic domain) with the PI3 kinase; upon CXADR-binding. Interacts with ITGA4 and ITGB1; integrin alpha-4/beta-1 may regulate leukocyte to endothelial cells adhesion by controlling JAML homodimerization. In terms of tissue distribution, expressed by gamma-delta intraepithelial T cells (at protein level).

Its subcellular location is the cell membrane. The protein localises to the cell junction. Functionally, transmembrane protein of the plasma membrane of leukocytes that control their migration and activation through interaction with CXADR, a plasma membrane receptor found on adjacent epithelial and endothelial cells. The interaction between both receptors mediates the activation of gamma-delta T-cells, a subpopulation of T-cells residing in epithelia and involved in tissue homeostasis and repair. Upon epithelial CXADR-binding, JAML induces downstream cell signaling events in gamma-delta T-cells through PI3-kinase and MAP kinases. It results in proliferation and production of cytokines and growth factors by T-cells that in turn stimulate epithelial tissues repair. It also controls the transmigration of leukocytes within epithelial and endothelial tissues through adhesive interactions with epithelial and endothelial CXADR. This Mus musculus (Mouse) protein is Junctional adhesion molecule-like.